A 78-amino-acid polypeptide reads, in one-letter code: Conotoxin 5 (78 aa).

The N-terminal stretch at 1–22 (MKLTCMMIVTVLFLTAWIFITA) is a signal peptide. Residues 23 to 49 (DNSRNGIENLPRMRRHEMKNPKASKLN) constitute a propeptide that is removed on maturation. 3 disulfide bridges follow: cysteine 53/cysteine 69, cysteine 60/cysteine 73, and cysteine 68/cysteine 77.

The protein belongs to the conotoxin O1 superfamily. As to expression, expressed by the venom duct.

It is found in the secreted. This is Conotoxin 5 from Conus imperialis (Imperial cone).